Consider the following 45-residue polypeptide: Large ribosomal subunit protein bL34 (45 aa).

The protein belongs to the bacterial ribosomal protein bL34 family.

The protein is Large ribosomal subunit protein bL34 of Acidothermus cellulolyticus (strain ATCC 43068 / DSM 8971 / 11B).